The following is a 63-amino-acid chain: uncharacterized protein (63 aa).

The interval 35 to 63 (PKPDSLISEHPTAQEAMDAKKRYEDPDKE) is disordered. Residues 51–63 (MDAKKRYEDPDKE) show a composition bias toward basic and acidic residues.

This is an uncharacterized protein from Escherichia coli O157:H7.